Here is a 426-residue protein sequence, read N- to C-terminus: Serine--tRNA ligase (426 aa).

233 to 235 is an L-serine binding site; that stretch reads TAE. 264-266 is a binding site for ATP; the sequence is RRE. L-serine is bound at residue Glu-287. An ATP-binding site is contributed by 351-354; the sequence is EISS. L-serine is bound at residue Ser-386.

It belongs to the class-II aminoacyl-tRNA synthetase family. Type-1 seryl-tRNA synthetase subfamily. In terms of assembly, homodimer. The tRNA molecule binds across the dimer.

The protein resides in the cytoplasm. The enzyme catalyses tRNA(Ser) + L-serine + ATP = L-seryl-tRNA(Ser) + AMP + diphosphate + H(+). It carries out the reaction tRNA(Sec) + L-serine + ATP = L-seryl-tRNA(Sec) + AMP + diphosphate + H(+). The protein operates within aminoacyl-tRNA biosynthesis; selenocysteinyl-tRNA(Sec) biosynthesis; L-seryl-tRNA(Sec) from L-serine and tRNA(Sec): step 1/1. Its function is as follows. Catalyzes the attachment of serine to tRNA(Ser). Is also able to aminoacylate tRNA(Sec) with serine, to form the misacylated tRNA L-seryl-tRNA(Sec), which will be further converted into selenocysteinyl-tRNA(Sec). In Prochlorococcus marinus (strain NATL1A), this protein is Serine--tRNA ligase.